The primary structure comprises 96 residues: Co-chaperonin GroES (96 aa).

This sequence belongs to the GroES chaperonin family. Heptamer of 7 subunits arranged in a ring. Interacts with the chaperonin GroEL.

Its subcellular location is the cytoplasm. In terms of biological role, together with the chaperonin GroEL, plays an essential role in assisting protein folding. The GroEL-GroES system forms a nano-cage that allows encapsulation of the non-native substrate proteins and provides a physical environment optimized to promote and accelerate protein folding. GroES binds to the apical surface of the GroEL ring, thereby capping the opening of the GroEL channel. This chain is Co-chaperonin GroES, found in Polaromonas sp. (strain JS666 / ATCC BAA-500).